The primary structure comprises 831 residues: Translation initiation factor IF-2 (831 aa).

The disordered stretch occupies residues 116–157 (IEPLETDKEVEQKQQNTEENKVEVSAKIVQDDEDIPSQIPKK). Over residues 117 to 139 (EPLETDKEVEQKQQNTEENKVEV) the composition is skewed to basic and acidic residues. In terms of domain architecture, tr-type G spans 329–499 (TRAPVVTVMG…LLIAEMQDLK (171 aa)). Positions 338 to 345 (GHVDHGKT) are G1. 338-345 (GHVDHGKT) lines the GTP pocket. The tract at residues 363–367 (GITQH) is G2. The segment at 385–388 (DTPG) is G3. GTP is bound by residues 385-389 (DTPGH) and 439-442 (NKID). A G4 region spans residues 439–442 (NKID). The tract at residues 475–477 (SAL) is G5.

Belongs to the TRAFAC class translation factor GTPase superfamily. Classic translation factor GTPase family. IF-2 subfamily.

It localises to the cytoplasm. One of the essential components for the initiation of protein synthesis. Protects formylmethionyl-tRNA from spontaneous hydrolysis and promotes its binding to the 30S ribosomal subunits. Also involved in the hydrolysis of GTP during the formation of the 70S ribosomal complex. In Rickettsia conorii (strain ATCC VR-613 / Malish 7), this protein is Translation initiation factor IF-2.